Consider the following 125-residue polypeptide: Probable mercury resistance operon repressor (125 aa).

Residues 15 to 109 form the HTH arsR-type domain; the sequence is VPCTHPDTTA…LARCLAADNA (95 aa). The H-T-H motif DNA-binding region spans 49–68; the sequence is SAECVEHAGISQPRVSVHLS. Hg(2+) contacts are provided by Cys69, Cys73, and Cys114.

Its function is as follows. Negatively regulates the mercuric reductase merA and the organolyase merB in the absence of mercuric ions. This chain is Probable mercury resistance operon repressor (merR), found in Streptomyces lividans.